Here is a 526-residue protein sequence, read N- to C-terminus: Peptide chain release factor 3 (526 aa).

The tr-type G domain maps to Asp9–Leu277. GTP contacts are provided by residues Ser18–Thr25, Asp86–His90, and Asn140–Asp143.

This sequence belongs to the TRAFAC class translation factor GTPase superfamily. Classic translation factor GTPase family. PrfC subfamily.

It is found in the cytoplasm. Functionally, increases the formation of ribosomal termination complexes and stimulates activities of RF-1 and RF-2. It binds guanine nucleotides and has strong preference for UGA stop codons. It may interact directly with the ribosome. The stimulation of RF-1 and RF-2 is significantly reduced by GTP and GDP, but not by GMP. The chain is Peptide chain release factor 3 from Shewanella sp. (strain MR-4).